Reading from the N-terminus, the 550-residue chain is Chaperonin GroEL (550 aa).

ATP contacts are provided by residues 30-33, K51, 87-91, G415, and D497; these read TLGP and DGTTT.

It belongs to the chaperonin (HSP60) family. Forms a cylinder of 14 subunits composed of two heptameric rings stacked back-to-back. Interacts with the co-chaperonin GroES.

The protein resides in the cytoplasm. The enzyme catalyses ATP + H2O + a folded polypeptide = ADP + phosphate + an unfolded polypeptide.. In terms of biological role, together with its co-chaperonin GroES, plays an essential role in assisting protein folding. The GroEL-GroES system forms a nano-cage that allows encapsulation of the non-native substrate proteins and provides a physical environment optimized to promote and accelerate protein folding. The protein is Chaperonin GroEL of Yersinia enterocolitica serotype O:8 / biotype 1B (strain NCTC 13174 / 8081).